Consider the following 688-residue polypeptide: Polyribonucleotide nucleotidyltransferase (688 aa).

Mg(2+) is bound by residues Asp484 and Asp490. The region spanning 550-609 (PTTEIFNVAPDKIIEIIGQGGRVIREIVEKFEVKIDLNKPSGEVKIMGNKERVLKTKEFI) is the KH domain. The S1 motif domain maps to 626–688 (DEVLEAQVKR…NKGKIALDLA (63 aa)).

The protein belongs to the polyribonucleotide nucleotidyltransferase family. Requires Mg(2+) as cofactor.

The protein localises to the cytoplasm. It carries out the reaction RNA(n+1) + phosphate = RNA(n) + a ribonucleoside 5'-diphosphate. Involved in mRNA degradation. Catalyzes the phosphorolysis of single-stranded polyribonucleotides processively in the 3'- to 5'-direction. This Helicobacter acinonychis (strain Sheeba) protein is Polyribonucleotide nucleotidyltransferase.